Consider the following 443-residue polypeptide: D(2) dopamine receptor (443 aa).

Over 1 to 37 (MDPLNLSWYDDDPESRNWSRPFNGSEGKVGKPHYNYY) the chain is Extracellular. 3 N-linked (GlcNAc...) asparagine glycosylation sites follow: N5, N17, and N23. The helical transmembrane segment at 38-60 (AMLLTLLIFVIVFGNVLVCMAVS) threads the bilayer. The Cytoplasmic portion of the chain corresponds to 61–70 (REKALQTTTN). Residues 71 to 93 (YLIVSLAVADLLVATLVMPWVVY) form a helical membrane-spanning segment. Topologically, residues 94–108 (LEVVGEWKFSRIHCD) are extracellular. C107 and C182 are disulfide-bonded. A helical membrane pass occupies residues 109–130 (IFVTLDVMMCTASILNLCAISI). Residues 131–151 (DRYTAVAMPMLYNTRYSSKRR) lie on the Cytoplasmic side of the membrane. A helical membrane pass occupies residues 152 to 172 (VTVMIAIVWVLSFTISCPLLF). The Extracellular portion of the chain corresponds to 173-188 (GLNNTDQNECIIANPA). The helical transmembrane segment at 189–213 (FVVYSSVVSFYVPFIVTLLVYIKIY) threads the bilayer. The tract at residues 211–373 (KIYIVLRRRR…SQQKEKKATQ (163 aa)) is interaction with PPP1R9B. At 214–373 (IVLRRRRKRV…SQQKEKKATQ (160 aa)) the chain is on the cytoplasmic side. Residues 282–331 (EMLSSTSPPERTRYSPIPPSHHQLTLPDPSHHGLHSTANSPVKPEKNGHA) form a disordered region. Residues 374–395 (MLAIVLGVFIICWLPFFITHIL) traverse the membrane as a helical segment. Topologically, residues 396-409 (NIHCDCNIPPVLYS) are extracellular. Residues C399 and C401 are joined by a disulfide bond. The helical transmembrane segment at 410–431 (AFTWLGYVNSAVNPIIYTTFNV) threads the bilayer. Over 432-443 (EFRKAFMKILHC) the chain is Cytoplasmic. C443 carries S-palmitoyl cysteine lipidation.

This sequence belongs to the G-protein coupled receptor 1 family. In terms of assembly, forms homo- and heterooligomers with DRD4. The interaction with DRD4 may modulate agonist-induced downstream signaling. Interacts with CADPS and CADPS2. Interacts with GPRASP1, PPP1R9B and CLIC6. Interacts with ARRB2. Interacts with HTR2A. Interacts with DRD1. Interacts with KCNA2. Palmitoylated. Palmitoylation which is required for proper localization to the plasma membrane and stability of the receptor could be carried on by ZDHHC4, ZDHHC3 and ZDHHC8.

The protein resides in the cell membrane. It is found in the golgi apparatus membrane. Its function is as follows. Dopamine receptor whose activity is mediated by G proteins which inhibit adenylyl cyclase. Positively regulates postnatal regression of retinal hyaloid vessels via suppression of VEGFR2/KDR activity, downstream of OPN5. The polypeptide is D(2) dopamine receptor (DRD2) (Mustela putorius furo (European domestic ferret)).